The following is a 529-amino-acid chain: Glucose-6-phosphate isomerase (529 aa).

Catalysis depends on E322, which acts as the Proton donor. Active-site residues include H351 and K455.

It belongs to the GPI family.

It is found in the cytoplasm. It carries out the reaction alpha-D-glucose 6-phosphate = beta-D-fructose 6-phosphate. It participates in carbohydrate biosynthesis; gluconeogenesis. Its pathway is carbohydrate degradation; glycolysis; D-glyceraldehyde 3-phosphate and glycerone phosphate from D-glucose: step 2/4. In terms of biological role, catalyzes the reversible isomerization of glucose-6-phosphate to fructose-6-phosphate. This Acaryochloris marina (strain MBIC 11017) protein is Glucose-6-phosphate isomerase.